The following is a 510-amino-acid chain: D-alanine--D-alanyl carrier protein ligase (510 aa).

Residue 157 to 158 (TS) participates in ATP binding. D202 provides a ligand contact to D-alanine. 297-302 (NTYGPT) is an ATP binding site. D-alanine is bound at residue V306. Residues D389 and K498 each coordinate ATP. Residue K498 coordinates D-alanine.

This sequence belongs to the ATP-dependent AMP-binding enzyme family. DltA subfamily.

The protein localises to the cytoplasm. It carries out the reaction holo-[D-alanyl-carrier protein] + D-alanine + ATP = D-alanyl-[D-alanyl-carrier protein] + AMP + diphosphate. It functions in the pathway cell wall biogenesis; lipoteichoic acid biosynthesis. Functionally, catalyzes the first step in the D-alanylation of lipoteichoic acid (LTA), the activation of D-alanine and its transfer onto the D-alanyl carrier protein (Dcp) DltC. In an ATP-dependent two-step reaction, forms a high energy D-alanyl-AMP intermediate, followed by transfer of the D-alanyl residue as a thiol ester to the phosphopantheinyl prosthetic group of the Dcp. D-alanylation of LTA plays an important role in modulating the properties of the cell wall in Gram-positive bacteria, influencing the net charge of the cell wall. This is D-alanine--D-alanyl carrier protein ligase from Listeria monocytogenes serotype 4b (strain CLIP80459).